The sequence spans 656 residues: FAST kinase domain-containing protein 3, mitochondrial (656 aa).

Residues 587–645 (VALCIDGPQRFCLGSKHLLGKEAIKQRHLRLLGYQVVQVPYHELELLTSRLELVDYLQR) form the RAP domain.

This sequence belongs to the FAST kinase family.

The protein localises to the mitochondrion. Its function is as follows. Required for normal mitochondrial respiration. Increases steady-state levels and half-lives of a subset of mature mitochondrial mRNAs MT-ND2, MT-ND3, MT-CYTB, MT-CO2, and MT-ATP8/6. Promotes MT-CO1 mRNA translation and increases mitochondrial complex IV assembly and activity. The protein is FAST kinase domain-containing protein 3, mitochondrial (Fastkd3) of Rattus norvegicus (Rat).